The primary structure comprises 609 residues: Zinc metalloproteinase-disintegrin-like VAP2B (609 aa).

The first 20 residues, 1–20, serve as a signal peptide directing secretion; sequence MIQVLLVTICLAAFPYQGSS. A propeptide spanning residues 21–189 is cleaved from the precursor; sequence IILESGNVND…KKASQLVVTA (169 aa). Glu-190 carries the post-translational modification Pyrrolidone carboxylic acid (Glu). A Peptidase M12B domain is found at 198–393; that stretch reads RFVELFLVVD…HNPECILNEP (196 aa). Ca(2+) is bound by residues Glu-201 and Asp-285. 3 disulfides stabilise this stretch: Cys-308–Cys-388, Cys-348–Cys-372, and Cys-350–Cys-355. His-333 serves as a coordination point for Zn(2+). The active site involves Glu-334. Residues His-337 and His-343 each contribute to the Zn(2+) site. N-linked (GlcNAc...) asparagine glycosylation occurs at Asn-371. Ca(2+) is bound by residues Cys-388, Asn-391, Val-403, Asn-406, Leu-408, Glu-410, Glu-413, and Asp-416. One can recognise a Disintegrin domain in the interval 401-487; that stretch reads PPVCGNELLE…ECPADVFHKN (87 aa). Cystine bridges form between Cys-404-Cys-423, Cys-404-Cys-433, Cys-415-Cys-428, Cys-415-Cys-433, Cys-417-Cys-423, Cys-427-Cys-450, Cys-441-Cys-447, Cys-446-Cys-472, Cys-459-Cys-479, Cys-466-Cys-491, Cys-466-Cys-498, Cys-491-Cys-503, Cys-498-Cys-503, Cys-510-Cys-525, Cys-510-Cys-560, Cys-525-Cys-571, Cys-538-Cys-548, Cys-548-Cys-555, Cys-555-Cys-597, Cys-560-Cys-571, Cys-591-Cys-602, and Cys-597-Cys-602. The tract at residues 459–472 is inhibits platelet aggregation; sequence CRASMSECDPAEHC. The D/ECD-tripeptide signature appears at 465 to 467; that stretch reads ECD. Residues Asp-467, Pro-468, Glu-470, Asp-482, and Val-483 each contribute to the Ca(2+) site.

Belongs to the venom metalloproteinase (M12B) family. P-III subfamily. P-IIIb sub-subfamily. In terms of assembly, monomer or heterodimer; non-covalently linked. Interacts with fibrillar collagen. Requires Zn(2+) as cofactor. The N-terminus is blocked. In terms of tissue distribution, expressed by the venom gland.

It localises to the secreted. Zinc metalloprotease that abolishes platelet aggregation induced by collagen, but has no effect on platelet aggregation induced by ADP or thromboxane analog. This inhibition may be due to its ability to bind collagen and block the binding site on collagen for platelets and/or to its ability to bind to the platelet alpha-2/beta-1 collagen receptor (ITGA2/ITGB1) to block its interaction with collagen and hence prevent platelet stimulation. Functionally, abolishes platelet aggregation induced by collagen (IC(50)=66 nM) but not ADP-stimulated platelet aggregation. This inhibition may be due to its ability to bind collagen and block the binding site on collagen for platelets and/or to its ability to bind to the platelet alpha-2/beta-1 collagen receptor (ITGA2/ITGB1) to block its interaction with collagen and hence prevent platelet stimulation. The polypeptide is Zinc metalloproteinase-disintegrin-like VAP2B (Crotalus atrox (Western diamondback rattlesnake)).